The chain runs to 336 residues: Phospho-N-acetylmuramoyl-pentapeptide-transferase (336 aa).

10 helical membrane passes run 3 to 23 (LTLI…PYFI), 53 to 73 (GGTV…LFSI), 78 to 98 (SLAL…IGFL), 118 to 138 (LALQ…PSGI), 143 to 163 (VFGY…FWVV), 174 to 194 (GIDG…GVIA), 200 to 220 (FDVL…FLFN), 226 to 246 (VFMG…ISIA), 251 to 271 (WTLL…MLQV), and 316 to 336 (AFLW…LYVF).

The protein belongs to the glycosyltransferase 4 family. MraY subfamily. Requires Mg(2+) as cofactor.

It localises to the cell membrane. It catalyses the reaction UDP-N-acetyl-alpha-D-muramoyl-L-alanyl-gamma-D-glutamyl-L-lysyl-D-alanyl-D-alanine + di-trans,octa-cis-undecaprenyl phosphate = Mur2Ac(oyl-L-Ala-gamma-D-Glu-L-Lys-D-Ala-D-Ala)-di-trans,octa-cis-undecaprenyl diphosphate + UMP. The protein operates within cell wall biogenesis; peptidoglycan biosynthesis. Functionally, catalyzes the initial step of the lipid cycle reactions in the biosynthesis of the cell wall peptidoglycan: transfers peptidoglycan precursor phospho-MurNAc-pentapeptide from UDP-MurNAc-pentapeptide onto the lipid carrier undecaprenyl phosphate, yielding undecaprenyl-pyrophosphoryl-MurNAc-pentapeptide, known as lipid I. The chain is Phospho-N-acetylmuramoyl-pentapeptide-transferase from Streptococcus pyogenes serotype M6 (strain ATCC BAA-946 / MGAS10394).